Reading from the N-terminus, the 176-residue chain is Disulfide bond formation protein B (176 aa).

Over 1–11 (MLQLTTYRNLQ) the chain is Cytoplasmic. Residues 12–28 (VFLVIMTAIGMSFALFF) form a helical membrane-spanning segment. At 29–46 (LQRYMGFSPCPLCIFQRI) the chain is on the periplasmic side. An intrachain disulfide couples C38 to C41. A helical membrane pass occupies residues 47–63 (GLMIMGGFALIAALFHP). Topologically, residues 64 to 70 (KSMVIRL) are cytoplasmic. A helical membrane pass occupies residues 71-88 (LLWLGSLAGIGWAAIVAG). Residues 89 to 145 (RHVWLQHLPADQVPSCGPGLDYWLDTLPMQQVLKEVFAGSGECASIEWTFLGLSIPE) lie on the Periplasmic side of the membrane. The cysteines at positions 104 and 131 are disulfide-linked. A helical transmembrane segment spans residues 146-164 (QSLILFSILILTHLLILWR). Residues 165 to 176 (IVRPSTPKPLAR) lie on the Cytoplasmic side of the membrane.

Belongs to the DsbB family.

The protein localises to the cell inner membrane. Required for disulfide bond formation in some periplasmic proteins. Acts by oxidizing the DsbA protein. This chain is Disulfide bond formation protein B, found in Psychrobacter arcticus (strain DSM 17307 / VKM B-2377 / 273-4).